Consider the following 459-residue polypeptide: NADH-ubiquinone oxidoreductase chain 4 (459 aa).

The next 13 helical transmembrane spans lie at 22 to 42 (MIWI…LLFF), 60 to 80 (PLTT…IMAS), 94 to 112 (LYLS…TFTA), 113 to 133 (TELI…LVII), 145 to 165 (AGTY…IALI), 196 to 216 (WLAY…HLWL), 224 to 244 (PIAG…YGMM), 257 to 277 (MAYP…SISL), 284 to 303 (SLIA…AILI), 308 to 330 (SFTG…FCLA), 351 to 371 (LLPL…ALPP), 391 to 411 (TTLL…LYMF), and 435 to 455 (ILMF…DIIT).

This sequence belongs to the complex I subunit 4 family. Core subunit of respiratory chain NADH dehydrogenase (Complex I) which is composed of 45 different subunits.

The protein resides in the mitochondrion inner membrane. It catalyses the reaction a ubiquinone + NADH + 5 H(+)(in) = a ubiquinol + NAD(+) + 4 H(+)(out). Functionally, core subunit of the mitochondrial membrane respiratory chain NADH dehydrogenase (Complex I) which catalyzes electron transfer from NADH through the respiratory chain, using ubiquinone as an electron acceptor. Essential for the catalytic activity and assembly of complex I. In Gorilla gorilla gorilla (Western lowland gorilla), this protein is NADH-ubiquinone oxidoreductase chain 4 (MT-ND4).